We begin with the raw amino-acid sequence, 744 residues long: Serine/threonine-protein kinase GM11705 (744 aa).

Polar residues predominate over residues 17-35; the sequence is VLSSHQPSPSATHPQSVPS. Disordered regions lie at residues 17–38 and 54–78; these read VLSSHQPSPSATHPQSVPSKAN and NVQEDNSYNRDCDSPVSSSSEPEKE. 2 consecutive Doublecortin domains span residues 154 to 240 and 309 to 392; these read LRIK…VEYN and RIVT…AEDF. The Protein kinase domain maps to 473–731; sequence YTLGRIIGDG…SEDILDHPWT (259 aa). Residues 479-487 and lysine 502 each bind ATP; that span reads IGDGNFAIV. Residue aspartate 594 is the Proton acceptor of the active site.

It belongs to the protein kinase superfamily. CAMK Ser/Thr protein kinase family. CaMK subfamily.

It carries out the reaction L-seryl-[protein] + ATP = O-phospho-L-seryl-[protein] + ADP + H(+). The catalysed reaction is L-threonyl-[protein] + ATP = O-phospho-L-threonyl-[protein] + ADP + H(+). This is Serine/threonine-protein kinase GM11705 from Drosophila sechellia (Fruit fly).